An 82-amino-acid chain; its full sequence is uncharacterized protein (82 aa).

A run of 2 helical transmembrane segments spans residues 22–39 (WASD…MFIA) and 46–65 (LKMG…TWVI).

It localises to the cell membrane. This is an uncharacterized protein from Bacillus subtilis (strain 168).